Consider the following 450-residue polypeptide: UDP-N-acetylglucosamine--peptide N-acetylglucosaminyltransferase stabilizing protein GtfB (450 aa).

Belongs to the GtfB family. In terms of assembly, forms a heterotetramer with 2 subunits each of GtfA and GtfB. Part of the accessory SecA2/SecY2 protein translocation apparatus required to export cell wall protein GspB.

It is found in the cell membrane. It participates in protein modification; protein glycosylation. Functionally, required for polymorphic O-glycosylation of GspB, a serine-rich repeat cell wall protein encoded upstream in the same operon. A substrate-binding protein that is part of the accessory SecA2/SecY2 system specifically required to export GspB. The GtfA-GtfB complex adds GlcNAc from UDP-GlcNAc to GspB, attaching the first sugar residue. Upon coexpression in E.coli with GtfA glycosylates GspB constructs. Binds the GspB protein substrate; alone this subunit only recognizes partially glycosylated GspB, but is constrained by GtfA to also recognize unglycosylated protein. The enzyme probably modifies its tertiary conformation by opening and closing its intersubunit interfaces to accomodate the increasingly glycosylated substrate. This is UDP-N-acetylglucosamine--peptide N-acetylglucosaminyltransferase stabilizing protein GtfB from Streptococcus gordonii.